Here is a 294-residue protein sequence, read N- to C-terminus: Cytidine deaminase (294 aa).

CMP/dCMP-type deaminase domains lie at 48–168 and 186–294; these read DEDA…FGPK and LEGD…VLLG. 89-91 lines the substrate pocket; that stretch reads NME. Histidine 102 is a Zn(2+) binding site. Glutamate 104 functions as the Proton donor in the catalytic mechanism. Residues cysteine 129 and cysteine 132 each coordinate Zn(2+).

This sequence belongs to the cytidine and deoxycytidylate deaminase family. As to quaternary structure, homodimer. Requires Zn(2+) as cofactor.

The catalysed reaction is cytidine + H2O + H(+) = uridine + NH4(+). It carries out the reaction 2'-deoxycytidine + H2O + H(+) = 2'-deoxyuridine + NH4(+). Functionally, this enzyme scavenges exogenous and endogenous cytidine and 2'-deoxycytidine for UMP synthesis. This chain is Cytidine deaminase, found in Citrobacter koseri (strain ATCC BAA-895 / CDC 4225-83 / SGSC4696).